The following is a 274-amino-acid chain: 2,3,4,5-tetrahydropyridine-2,6-dicarboxylate N-succinyltransferase (274 aa).

The substrate site is built by arginine 104 and aspartate 141.

It belongs to the transferase hexapeptide repeat family. In terms of assembly, homotrimer.

It localises to the cytoplasm. The enzyme catalyses (S)-2,3,4,5-tetrahydrodipicolinate + succinyl-CoA + H2O = (S)-2-succinylamino-6-oxoheptanedioate + CoA. The protein operates within amino-acid biosynthesis; L-lysine biosynthesis via DAP pathway; LL-2,6-diaminopimelate from (S)-tetrahydrodipicolinate (succinylase route): step 1/3. This chain is 2,3,4,5-tetrahydropyridine-2,6-dicarboxylate N-succinyltransferase, found in Shigella boydii serotype 4 (strain Sb227).